Here is a 249-residue protein sequence, read N- to C-terminus: 5'-nucleotidase SurE (249 aa).

Positions 8, 9, 39, and 91 each coordinate a divalent metal cation.

It belongs to the SurE nucleotidase family. A divalent metal cation is required as a cofactor.

Its subcellular location is the cytoplasm. It carries out the reaction a ribonucleoside 5'-phosphate + H2O = a ribonucleoside + phosphate. Functionally, nucleotidase that shows phosphatase activity on nucleoside 5'-monophosphates. The protein is 5'-nucleotidase SurE of Pseudomonas syringae pv. tomato (strain ATCC BAA-871 / DC3000).